Reading from the N-terminus, the 333-residue chain is Glycerol-3-phosphate dehydrogenase [NAD(P)+] (333 aa).

3 residues coordinate NADPH: Trp16, Arg36, and Lys109. Sn-glycerol 3-phosphate-binding residues include Lys109, Gly137, and Ser139. Ala141 serves as a coordination point for NADPH. Lys192, Asp245, Ser255, Arg256, and Asn257 together coordinate sn-glycerol 3-phosphate. Lys192 functions as the Proton acceptor in the catalytic mechanism. Arg256 contributes to the NADPH binding site. Positions 280 and 282 each coordinate NADPH.

This sequence belongs to the NAD-dependent glycerol-3-phosphate dehydrogenase family.

It localises to the cytoplasm. The catalysed reaction is sn-glycerol 3-phosphate + NAD(+) = dihydroxyacetone phosphate + NADH + H(+). It catalyses the reaction sn-glycerol 3-phosphate + NADP(+) = dihydroxyacetone phosphate + NADPH + H(+). Its pathway is membrane lipid metabolism; glycerophospholipid metabolism. Its function is as follows. Catalyzes the reduction of the glycolytic intermediate dihydroxyacetone phosphate (DHAP) to sn-glycerol 3-phosphate (G3P), the key precursor for phospholipid synthesis. The protein is Glycerol-3-phosphate dehydrogenase [NAD(P)+] of Parvibaculum lavamentivorans (strain DS-1 / DSM 13023 / NCIMB 13966).